The chain runs to 102 residues: Acid shock protein (102 aa).

The N-terminal stretch at 1–21 is a signal peptide; that stretch reads MKKVLALVVAAAMGLSSAAFA. The propeptide occupies 22-58; that stretch reads AETAITPAPTATTTKAAPAKTTHHKKQHKAAPAQKAQ. Over residues 26 to 41 the composition is skewed to low complexity; that stretch reads ITPAPTATTTKAAPAK. The disordered stretch occupies residues 26 to 102; that stretch reads ITPAPTATTT…PAKPAAQPAA (77 aa). The segment covering 80–90 has biased composition (basic residues); that stretch reads AAKKHAKKHSH. Residues 91–102 are compositionally biased toward low complexity; that stretch reads QQPAKPAAQPAA.

The protein belongs to the Asr family. Post-translationally, proteolytic processing gives rise to the active protein.

Its subcellular location is the periplasm. Its function is as follows. Required for growth and/or survival at acidic conditions. This is Acid shock protein from Escherichia coli O81 (strain ED1a).